Reading from the N-terminus, the 68-residue chain is Small ribosomal subunit protein bS21 (68 aa).

A disordered region spans residues 35-68 (HYEKPSEKRARERAAAVRRARKMERKRMERDGIK). Residues 37–49 (EKPSEKRARERAA) show a composition bias toward basic and acidic residues. A compositionally biased stretch (basic residues) spans 50-59 (AVRRARKMER).

The protein belongs to the bacterial ribosomal protein bS21 family.

The polypeptide is Small ribosomal subunit protein bS21 (Sphingopyxis alaskensis (strain DSM 13593 / LMG 18877 / RB2256) (Sphingomonas alaskensis)).